Consider the following 331-residue polypeptide: Large ribosomal subunit protein uL3 (331 aa).

It belongs to the universal ribosomal protein uL3 family. Part of the 50S ribosomal subunit. Forms a cluster with proteins L14 and L24e.

In terms of biological role, one of the primary rRNA binding proteins, it binds directly near the 3'-end of the 23S rRNA, where it nucleates assembly of the 50S subunit. The protein is Large ribosomal subunit protein uL3 of Archaeoglobus fulgidus (strain ATCC 49558 / DSM 4304 / JCM 9628 / NBRC 100126 / VC-16).